We begin with the raw amino-acid sequence, 301 residues long: Probable alpha-L-glutamate ligase (301 aa).

The ATP-grasp domain maps to 104 to 287 (LQLMSRKGLG…VASMIIKHIE (184 aa)). Residues lysine 141, 178-179 (EY), aspartate 187, and 211-213 (RSN) contribute to the ATP site. Residues aspartate 248, glutamate 260, and asparagine 262 each coordinate Mg(2+). Mn(2+)-binding residues include aspartate 248, glutamate 260, and asparagine 262.

Belongs to the RimK family. Mg(2+) serves as cofactor. The cofactor is Mn(2+).

The polypeptide is Probable alpha-L-glutamate ligase (Marinomonas sp. (strain MWYL1)).